Here is a 394-residue protein sequence, read N- to C-terminus: MTQLETRTEPMVVNFGPHHPSMHGVLRLVVTLDGEDVVDCEPVIGYLHRGMEKIAENRTNVMFVPYVSRMDYAAGMFYEAIVVNAPEKLANIPVPKRASYIRVLMLELNRIANHLLWLGPFLADVGAQTPFFYIFREREMIYDLWEAATGQRLINNNYFRIGGVAADLPWGWLEKCRDFCDWFGPKIDEYEKLITNNPIFRRRIEGLGRIEKEDAINWSLSGPMLRASGVPWDLRKVDHYECYDDFDWQVAWEKEGDCYARYRVRIEEMRQSLKILRQACDMIPGGPTENLEAKRLNEGKGSDAAGFDFQYVAKKVAPTFKIPNGELYTRLESGKGEIGVFIQGNNDVTPWRFKIRAADSNNLQILPHILKGHKVADIMAILGSIDVIMGSVDR.

Belongs to the complex I 49 kDa subunit family. In terms of assembly, NDH-1 can be composed of about 15 different subunits; different subcomplexes with different compositions have been identified which probably have different functions.

It is found in the cellular thylakoid membrane. It carries out the reaction a plastoquinone + NADH + (n+1) H(+)(in) = a plastoquinol + NAD(+) + n H(+)(out). It catalyses the reaction a plastoquinone + NADPH + (n+1) H(+)(in) = a plastoquinol + NADP(+) + n H(+)(out). Functionally, NDH-1 shuttles electrons from an unknown electron donor, via FMN and iron-sulfur (Fe-S) centers, to quinones in the respiratory and/or the photosynthetic chain. The immediate electron acceptor for the enzyme in this species is believed to be plastoquinone. Couples the redox reaction to proton translocation, and thus conserves the redox energy in a proton gradient. Cyanobacterial NDH-1 also plays a role in inorganic carbon-concentration. The protein is NAD(P)H-quinone oxidoreductase subunit H of Synechococcus sp. (strain CC9605).